A 385-amino-acid polypeptide reads, in one-letter code: Glycerol-3-phosphate dehydrogenase [NAD(+)] 1 (385 aa).

NAD(+) contacts are provided by residues 29–34, F121, K144, and A177; that span reads GSGNWG. Position 144 (K144) interacts with substrate. Residue K232 is the Proton acceptor of the active site. NAD(+) is bound by residues R296 and Q325. 296-297 is a binding site for substrate; the sequence is RN. Phosphoserine is present on S376. Phosphothreonine is present on T382.

Belongs to the NAD-dependent glycerol-3-phosphate dehydrogenase family.

The protein localises to the cytoplasm. It catalyses the reaction sn-glycerol 3-phosphate + NAD(+) = dihydroxyacetone phosphate + NADH + H(+). This chain is Glycerol-3-phosphate dehydrogenase [NAD(+)] 1 (gpd1), found in Schizosaccharomyces pombe (strain 972 / ATCC 24843) (Fission yeast).